The primary structure comprises 104 residues: NADH-quinone oxidoreductase subunit K (104 aa).

The next 3 membrane-spanning stretches (helical) occupy residues 7 to 27 (LSHY…GIFL), 33 to 53 (IVIL…LVSF), and 67 to 87 (LLVL…LVVF).

This sequence belongs to the complex I subunit 4L family. In terms of assembly, NDH-1 is composed of 14 different subunits. Subunits NuoA, H, J, K, L, M, N constitute the membrane sector of the complex.

It is found in the cell inner membrane. It carries out the reaction a quinone + NADH + 5 H(+)(in) = a quinol + NAD(+) + 4 H(+)(out). Its function is as follows. NDH-1 shuttles electrons from NADH, via FMN and iron-sulfur (Fe-S) centers, to quinones in the respiratory chain. The immediate electron acceptor for the enzyme in this species is believed to be ubiquinone. Couples the redox reaction to proton translocation (for every two electrons transferred, four hydrogen ions are translocated across the cytoplasmic membrane), and thus conserves the redox energy in a proton gradient. The chain is NADH-quinone oxidoreductase subunit K from Xanthobacter autotrophicus (strain ATCC BAA-1158 / Py2).